Here is an 81-residue protein sequence, read N- to C-terminus: Photosystem I iron-sulfur center (81 aa).

4Fe-4S ferredoxin-type domains follow at residues 2 to 31 and 39 to 68; these read SHSVKIYDTCIGCTQCVRACPTDVLEMIPW and IASAPRTEDCVGCKRCESACPTDFLSVRVY. [4Fe-4S] cluster contacts are provided by Cys-11, Cys-14, Cys-17, Cys-21, Cys-48, Cys-51, Cys-54, and Cys-58.

As to quaternary structure, the eukaryotic PSI reaction center is composed of at least 11 subunits. [4Fe-4S] cluster is required as a cofactor.

It localises to the plastid. Its subcellular location is the chloroplast thylakoid membrane. The catalysed reaction is reduced [plastocyanin] + hnu + oxidized [2Fe-2S]-[ferredoxin] = oxidized [plastocyanin] + reduced [2Fe-2S]-[ferredoxin]. Functionally, apoprotein for the two 4Fe-4S centers FA and FB of photosystem I (PSI); essential for photochemical activity. FB is the terminal electron acceptor of PSI, donating electrons to ferredoxin. The C-terminus interacts with PsaA/B/D and helps assemble the protein into the PSI complex. Required for binding of PsaD and PsaE to PSI. PSI is a plastocyanin-ferredoxin oxidoreductase, converting photonic excitation into a charge separation, which transfers an electron from the donor P700 chlorophyll pair to the spectroscopically characterized acceptors A0, A1, FX, FA and FB in turn. This chain is Photosystem I iron-sulfur center, found in Helianthus annuus (Common sunflower).